A 62-amino-acid chain; its full sequence is Phylloseptin-Az7 (62 aa).

The N-terminal stretch at 1 to 19 (LKKSLFLVLFLGLVSLSIC) is a signal peptide. Positions 20-40 (EEEKRETEEKENEQEDDKSEE) are excised as a propeptide. F61 carries the phenylalanine amide modification.

This sequence belongs to the frog skin active peptide (FSAP) family. Phylloseptin subfamily. Expressed by the skin glands.

It localises to the secreted. In terms of biological role, has antimicrobial activity. The sequence is that of Phylloseptin-Az7 (psn15) from Pithecopus azureus (Orange-legged monkey tree frog).